Consider the following 374-residue polypeptide: Glutamate 5-kinase (374 aa).

Lys16 contacts ATP. Substrate contacts are provided by Ser56, Asp143, and Asn155. 175 to 176 lines the ATP pocket; the sequence is TD. The region spanning 282 to 360 is the PUA domain; sequence RGRVVLDAGA…SEIEAVLGYV (79 aa).

The protein belongs to the glutamate 5-kinase family.

Its subcellular location is the cytoplasm. It catalyses the reaction L-glutamate + ATP = L-glutamyl 5-phosphate + ADP. It participates in amino-acid biosynthesis; L-proline biosynthesis; L-glutamate 5-semialdehyde from L-glutamate: step 1/2. Catalyzes the transfer of a phosphate group to glutamate to form L-glutamate 5-phosphate. The chain is Glutamate 5-kinase from Ralstonia nicotianae (strain ATCC BAA-1114 / GMI1000) (Ralstonia solanacearum).